We begin with the raw amino-acid sequence, 450 residues long: Probable glycosidase CRR1 (450 aa).

Residues 1–17 (MSKRIIQLILLSAFARA) form the signal peptide. In terms of domain architecture, GH16 spans 67-347 (SPESCVPVPA…WENAPDIKAH (281 aa)). The Nucleophile role is filled by E225. Catalysis depends on E229, which acts as the Proton donor. The tract at residues 428–450 (AQRQQHHRRSLPHVEAPPITNTM) is disordered.

It belongs to the glycosyl hydrolase 16 family. CRR1 subfamily.

The protein resides in the spore wall. Its function is as follows. Spore specific glycosidase involved in spore wall assembly during sporulation. May be involved in copper import. The sequence is that of Probable glycosidase CRR1 (CRR1) from Eremothecium gossypii (strain ATCC 10895 / CBS 109.51 / FGSC 9923 / NRRL Y-1056) (Yeast).